The primary structure comprises 114 residues: MSNETVLPLQFTEAAAKKVKLLISDEENPNLKLRVYITGGGCSGFQYGFTFDDQVNDGDMTIEKQGVELVVDPMSLQYLVGGAVDYTEGLEGSRFIVTNPNAKSTCGCGSSFSI.

Positions 42, 106, and 108 each coordinate iron-sulfur cluster.

This sequence belongs to the HesB/IscA family. As to quaternary structure, homodimer. Iron-sulfur cluster serves as cofactor.

Its function is as follows. Required for insertion of 4Fe-4S clusters for at least IspG. The polypeptide is Iron-sulfur cluster insertion protein ErpA (Yersinia pseudotuberculosis serotype O:1b (strain IP 31758)).